The following is a 204-amino-acid chain: Transcription factor bHLH120 (204 aa).

Disordered regions lie at residues 1–27 (MNPSNNPKKTRHQSHMPQERDETKKEK) and 93–116 (KREIGDPTSLTGSGSGSGSSRSEP). The region spanning 26–78 (EKKLLHRNIERQRRQEMAILFASLRSQLPLKYIKGKRAMSDHVNGAVSFIKDT) is the bHLH domain.

In terms of assembly, homodimer.

The protein resides in the nucleus. The chain is Transcription factor bHLH120 (BHLH120) from Arabidopsis thaliana (Mouse-ear cress).